A 308-amino-acid polypeptide reads, in one-letter code: Low density lipoprotein receptor adapter protein 1 (308 aa).

Residue methionine 1 is modified to N-acetylmethionine. Phosphoserine occurs at positions 14, 186, and 202. A PID domain is found at 42 to 196 (LLEGMLFSLK…QEGGDVLGAR (155 aa)). The Clathrin box signature appears at 212-216 (LLDLE). The tract at residues 249-276 (WELDDGLDEAFSRLAQSRTNPQVLDTGL) is AP-2 complex binding. Residues 257–266 (EAFSRLAQSR) carry the [DE]-X(1,2)-F-X-X-[FL]-X-X-X-R motif motif.

As to quaternary structure, interacts (via PID domain) with LDLR (via NPXY motif). Binds to soluble clathrin trimers. Interacts with AP2B1; the interaction mediates the association with the AP-2 complex. Interacts with VLDLR. Interacts with LRP2. Expressed at high levels in the kidney, liver, and placenta, with lower levels detectable in brain, heart, muscle, colon, spleen, intestine, lung, and leukocytes.

Its subcellular location is the cytoplasm. Its function is as follows. Adapter protein (clathrin-associated sorting protein (CLASP)) required for efficient endocytosis of the LDL receptor (LDLR) in polarized cells such as hepatocytes and lymphocytes, but not in non-polarized cells (fibroblasts). May be required for LDL binding and internalization but not for receptor clustering in coated pits. May facilitate the endocytosis of LDLR and LDLR-LDL complexes from coated pits by stabilizing the interaction between the receptor and the structural components of the pits. May also be involved in the internalization of other LDLR family members. Binds to phosphoinositides, which regulate clathrin bud assembly at the cell surface. Required for trafficking of LRP2 to the endocytic recycling compartment which is necessary for LRP2 proteolysis, releasing a tail fragment which translocates to the nucleus and mediates transcriptional repression. The protein is Low density lipoprotein receptor adapter protein 1 of Homo sapiens (Human).